The primary structure comprises 473 residues: MSSESSQGLVTRLALIAAIGGLLFGYDSAVIAAIGTPVDIHFIAPRHLSATAAASLSGMVVVAVLVGCVTGSLLSGWIGIRFGRRGGLLMSSICFVAAGFGAALTEKLFGTGGSALQIFCFFRFLAGLGIGVVSTLTPTYIAEIAPPDKRGQMVSGQQMAIVTGALTGYIFTWLLAHFGSIDWVNASGWCWSPASEGLIGIAFLLLLLTAPDTPHWLVMKGRHSEASKILARLEPQADPNLTIQKIKAGFDKAMDKSSAGLFAFGITVVFAGVSVAAFQQLVGINAVLYYAPQMFQNLGFGADTALLQTISIGVVNFIFTMIASRVVDRFGRKPLLIWGALGMAAMMAVLGCCFWFKVGGVLPLASVLLYIAVFGMSWGPVCWVVLSEMFPSSIKGAAMPIAVTGQWLANILVNFLFKVADGSPALNQTFNHGFSYLVFAALSILGGLIVARFVPETKGRSLDEIEEMWRSQK.

The Cytoplasmic portion of the chain corresponds to 1–13; that stretch reads MSSESSQGLVTRL. A helical membrane pass occupies residues 14–34; sequence ALIAAIGGLLFGYDSAVIAAI. The Periplasmic segment spans residues 35-59; that stretch reads GTPVDIHFIAPRHLSATAAASLSGM. The helical transmembrane segment at 60–80 threads the bilayer; sequence VVVAVLVGCVTGSLLSGWIGI. The Cytoplasmic portion of the chain corresponds to 81 to 85; sequence RFGRR. Residues 86–106 form a helical membrane-spanning segment; the sequence is GGLLMSSICFVAAGFGAALTE. Residues 107–112 lie on the Periplasmic side of the membrane; the sequence is KLFGTG. A helical membrane pass occupies residues 113–133; that stretch reads GSALQIFCFFRFLAGLGIGVV. Topologically, residues 134-158 are cytoplasmic; the sequence is STLTPTYIAEIAPPDKRGQMVSGQQ. Residues 159-179 form a helical membrane-spanning segment; that stretch reads MAIVTGALTGYIFTWLLAHFG. The Periplasmic portion of the chain corresponds to 180 to 187; the sequence is SIDWVNAS. A helical membrane pass occupies residues 188–208; that stretch reads GWCWSPASEGLIGIAFLLLLL. Residues 209–257 lie on the Cytoplasmic side of the membrane; that stretch reads TAPDTPHWLVMKGRHSEASKILARLEPQADPNLTIQKIKAGFDKAMDKS. The chain crosses the membrane as a helical span at residues 258–278; sequence SAGLFAFGITVVFAGVSVAAF. Over 279-303 the chain is Periplasmic; sequence QQLVGINAVLYYAPQMFQNLGFGAD. The chain crosses the membrane as a helical span at residues 304-324; sequence TALLQTISIGVVNFIFTMIAS. Residues 325–335 lie on the Cytoplasmic side of the membrane; the sequence is RVVDRFGRKPL. The chain crosses the membrane as a helical span at residues 336–356; that stretch reads LIWGALGMAAMMAVLGCCFWF. At 357–366 the chain is on the periplasmic side; the sequence is KVGGVLPLAS. The helical transmembrane segment at 367–387 threads the bilayer; sequence VLLYIAVFGMSWGPVCWVVLS. The Cytoplasmic segment spans residues 388–396; it reads EMFPSSIKG. Residues 397 to 417 traverse the membrane as a helical segment; it reads AAMPIAVTGQWLANILVNFLF. Residues 418 to 429 are Periplasmic-facing; the sequence is KVADGSPALNQT. The helical transmembrane segment at 430 to 450 threads the bilayer; sequence FNHGFSYLVFAALSILGGLIV. Residues 451–473 lie on the Cytoplasmic side of the membrane; the sequence is ARFVPETKGRSLDEIEEMWRSQK.

Belongs to the major facilitator superfamily. Sugar transporter (TC 2.A.1.1) family.

The protein localises to the cell inner membrane. Allows uptake of glucose by the cell; allows growth on glucose minimal medium by E.coli cells impaired in glucose transport. Also transports fructose, but has a strong preference for glucose. This chain is Glucose facilitated diffusion protein, found in Zymomonas mobilis subsp. mobilis (strain ATCC 31821 / ZM4 / CP4).